A 258-amino-acid chain; its full sequence is Hydroxyacylglutathione hydrolase (258 aa).

Positions 55, 57, 59, 60, 115, 132, and 170 each coordinate Zn(2+).

It belongs to the metallo-beta-lactamase superfamily. Glyoxalase II family. As to quaternary structure, monomer. Zn(2+) is required as a cofactor.

The catalysed reaction is an S-(2-hydroxyacyl)glutathione + H2O = a 2-hydroxy carboxylate + glutathione + H(+). The protein operates within secondary metabolite metabolism; methylglyoxal degradation; (R)-lactate from methylglyoxal: step 2/2. In terms of biological role, thiolesterase that catalyzes the hydrolysis of S-D-lactoyl-glutathione to form glutathione and D-lactic acid. The chain is Hydroxyacylglutathione hydrolase from Shewanella halifaxensis (strain HAW-EB4).